Here is a 328-residue protein sequence, read N- to C-terminus: MTAMTNIYETTIIGGGPAGLYAAFQAGLYGLNGQLLEGDQQFGGKVATYAERVIHDIGGMPNITGQDLIQNLTAQAAFYDTPLRTQTLVTDVKYLADQDYYQIDTPDDRYYSQTLILAMGGGVVRPKQLRLFEEQTFENVHYAPANPEDYRDQRVVLIGPGYNLMELAPHLLATAKSVVWLTTKRPFVDEAAEKAFLTAYPQIDYYCQPLASYQQVDQQVTSITLADQTQITFDQAVVSLGYRRSLQTLDQWQLSAEQIEERPDIWVIGNQIPDRAGISLLTSAFQDGITAVTEIVAQLKPTAKTPMVTTHNPVFQADTKAYWQERLR.

Residues Glu37, Lys45, Tyr49, Val89, and Thr310 each contribute to the FAD site.

It belongs to the ferredoxin--NADP reductase type 2 family. In terms of assembly, homodimer. It depends on FAD as a cofactor.

It catalyses the reaction 2 reduced [2Fe-2S]-[ferredoxin] + NADP(+) + H(+) = 2 oxidized [2Fe-2S]-[ferredoxin] + NADPH. The polypeptide is Ferredoxin--NADP reductase 1 (Latilactobacillus sakei subsp. sakei (strain 23K) (Lactobacillus sakei subsp. sakei)).